Reading from the N-terminus, the 159-residue chain is Mesogenin-1 (159 aa).

Residues 79 to 101 (PGQARLPKGTKVRMSAQRRRKAS) are disordered. A compositionally biased stretch (basic residues) spans 86–100 (KGTKVRMSAQRRRKA). Residues 95–149 (QRRRKASEREKLRMRTLADALHTLRNYLPPAYSQRGQPLTKIQTLKCTIKYISEL) form the bHLH domain.

Its subcellular location is the nucleus. Functionally, involved in specifying the paraxial, but not dorsal, mesoderm. May regulate the expression of T-box transcription factors required for mesoderm formation and differentiation. The polypeptide is Mesogenin-1 (MSGN1) (Gallus gallus (Chicken)).